The following is a 316-amino-acid chain: Mitochondrial GTPase 1 (316 aa).

Positions 28 to 203 (MKQMQQKLKQ…LLDTPGILKP (176 aa)) constitute a CP-type G domain. GTP-binding positions include 73 to 76 (NKKD), 147 to 152 (NVGKSS), and Gly199.

This sequence belongs to the TRAFAC class YlqF/YawG GTPase family. MTG1 subfamily.

It is found in the mitochondrion inner membrane. Its function is as follows. Plays a role in the regulation of the mitochondrial ribosome assembly and of translational activity. Displays mitochondrial GTPase activity. The polypeptide is Mitochondrial GTPase 1 (Aedes aegypti (Yellowfever mosquito)).